The primary structure comprises 394 residues: Elongation factor Tu (394 aa).

In terms of domain architecture, tr-type G spans 10–204 (KPHVNIGTIG…AVDSYIPQPV (195 aa)). Residues 19-26 (GHVDHGKT) are G1. 19–26 (GHVDHGKT) lines the GTP pocket. A Mg(2+)-binding site is contributed by T26. The interval 60–64 (GITIS) is G2. The G3 stretch occupies residues 81 to 84 (DCPG). GTP is bound by residues 81 to 85 (DCPGH) and 136 to 139 (NKID). The interval 136–139 (NKID) is G4. Residues 174-176 (SAL) are G5.

It belongs to the TRAFAC class translation factor GTPase superfamily. Classic translation factor GTPase family. EF-Tu/EF-1A subfamily. Monomer.

Its subcellular location is the cytoplasm. The enzyme catalyses GTP + H2O = GDP + phosphate + H(+). Its function is as follows. GTP hydrolase that promotes the GTP-dependent binding of aminoacyl-tRNA to the A-site of ribosomes during protein biosynthesis. This chain is Elongation factor Tu, found in Rickettsia peacockii (strain Rustic).